A 213-amino-acid chain; its full sequence is Heterochromatin protein 1 (213 aa).

Disordered stretches follow at residues 1 to 24 (MGKK…EEEY) and 74 to 151 (RKDE…TGFD). The region spanning 24–82 (YAVEKILDRRVRKGKVEYYLKWKGYAETENTWEPEGNLDCQDLIQQYELSRKDEANAAA) is the Chromo 1 domain. Over residues 89–104 (SKKERPGSSTKVKETG) the composition is skewed to basic and acidic residues. Residues 105–115 (RTSTTASNSSG) are compositionally biased toward polar residues. The region spanning 154 to 212 (LEAEKILGASDNNGRLTFLIQFKGVDQAEMVPSTVANVKIPQMVIRFYEERLSWYSDNE) is the Chromo 2 domain.

The protein localises to the nucleus. In terms of biological role, structural component of heterochromatin, involved in gene repression and the modification of position-effect-variegation. Recognizes and binds histone H3 tails methylated at 'Lys-9', leading to epigenetic repression. In Drosophila virilis (Fruit fly), this protein is Heterochromatin protein 1 (HP1A).